We begin with the raw amino-acid sequence, 340 residues long: Cytochrome c oxidase subunit 1 (340 aa).

A helical membrane pass occupies residues 18–38 (MCYLLVAILCGFLGYIYSLFI). Positions 41 and 46 each coordinate Ca(2+). The chain crosses the membrane as a helical span at residues 42-62 (LSIIGCGVLFGDYQYYNVLVT). His-64 contributes to the Fe(II)-heme a binding site. The next 7 helical transmembrane spans lie at 66–86 (LVMV…NYFV), 100–120 (LNNM…SGLL), 148–168 (FTVF…INLL), 186–206 (LFIW…PVLA), 237–257 (LFWF…FGLI), 279–299 (MILI…VVGM), and 305–325 (AYFG…LFNW). His-243 contributes to the Cu cation binding site. The segment at residues 243–247 (HPEVY) is a cross-link (1'-histidyl-3'-tyrosine (His-Tyr)). Tyr-247 contacts O2. Positions 292 and 293 each coordinate Cu cation.

The protein belongs to the heme-copper respiratory oxidase family. Component of the cytochrome c oxidase (complex IV, CIV), a multisubunit enzyme composed of a catalytic core of 3 subunits and several supernumerary subunits. The complex exists as a monomer or a dimer and forms supercomplexes (SCs) in the inner mitochondrial membrane with ubiquinol-cytochrome c oxidoreductase (cytochrome b-c1 complex, complex III, CIII). Heme is required as a cofactor. Requires Cu cation as cofactor.

It localises to the mitochondrion inner membrane. It carries out the reaction 4 Fe(II)-[cytochrome c] + O2 + 8 H(+)(in) = 4 Fe(III)-[cytochrome c] + 2 H2O + 4 H(+)(out). Its pathway is energy metabolism; oxidative phosphorylation. In terms of biological role, component of the cytochrome c oxidase, the last enzyme in the mitochondrial electron transport chain which drives oxidative phosphorylation. The respiratory chain contains 3 multisubunit complexes succinate dehydrogenase (complex II, CII), ubiquinol-cytochrome c oxidoreductase (cytochrome b-c1 complex, complex III, CIII) and cytochrome c oxidase (complex IV, CIV), that cooperate to transfer electrons derived from NADH and succinate to molecular oxygen, creating an electrochemical gradient over the inner membrane that drives transmembrane transport and the ATP synthase. Cytochrome c oxidase is the component of the respiratory chain that catalyzes the reduction of oxygen to water. Electrons originating from reduced cytochrome c in the intermembrane space (IMS) are transferred via the dinuclear copper A center (CU(A)) of subunit 2 and heme A of subunit 1 to the active site in subunit 1, a binuclear center (BNC) formed by heme A3 and copper B (CU(B)). The BNC reduces molecular oxygen to 2 water molecules using 4 electrons from cytochrome c in the IMS and 4 protons from the mitochondrial matrix. In Strigomonas oncopelti (Parasitic flagellate), this protein is Cytochrome c oxidase subunit 1 (COI).